The following is a 282-amino-acid chain: uncharacterized protein (282 aa).

This sequence belongs to the glycosyltransferase 2 family. WaaE/KdtX subfamily.

This is an uncharacterized protein from Rickettsia conorii (strain ATCC VR-613 / Malish 7).